An 87-amino-acid polypeptide reads, in one-letter code: MFKVYGYDSNIHKCVYCDNAKRLLTVKKQPFEFINIMPEKGVFDDEKIAELLTKLGRDTQIGLTMPQVFAPDGSHIGGFDQLREYFK.

The Glutaredoxin domain maps to methionine 1 to lysine 87. A disulfide bond links cysteine 14 and cysteine 17.

The protein belongs to the glutaredoxin family.

In terms of biological role, serves as a reducing agent for the phage-induced ribonucleotide reductase, but not for the bacterial ones. This specificity may be the result of sequence differences around the redox-active disulfide bond. The oxidized form accepts electrons from bacterial glutathione and will, in turn, reduce other small disulfides. Can also be reduced by NADPH and by bacterial thioredoxin reductase. This chain is Glutaredoxin (NRDC), found in Enterobacteria phage T4 (Bacteriophage T4).